The chain runs to 147 residues: Hemoglobin subunit gamma (147 aa).

The region spanning 3-147 (HFTAEEKAAI…VANALAYKYH (145 aa)) is the Globin domain. Heme b-binding residues include histidine 64 and histidine 93.

This sequence belongs to the globin family. Heterotetramer of two alpha chains and two gamma chains in fetal hemoglobin (Hb F). Red blood cells.

In terms of biological role, gamma chains make up the fetal hemoglobin F, in combination with alpha chains. This chain is Hemoglobin subunit gamma (HBG), found in Elephas maximus (Indian elephant).